A 185-amino-acid chain; its full sequence is Elongation factor P (185 aa).

The protein belongs to the elongation factor P family.

The protein resides in the cytoplasm. The protein operates within protein biosynthesis; polypeptide chain elongation. Functionally, involved in peptide bond synthesis. Stimulates efficient translation and peptide-bond synthesis on native or reconstituted 70S ribosomes in vitro. Probably functions indirectly by altering the affinity of the ribosome for aminoacyl-tRNA, thus increasing their reactivity as acceptors for peptidyl transferase. This is Elongation factor P from Bacillus cereus (strain B4264).